The following is a 227-amino-acid chain: Staphylococcal superantigen-like 10 (227 aa).

The N-terminal stretch at 1 to 30 (MKFTALAKATLALGILTTGTLTTEVHSGHA) is a signal peptide.

This sequence belongs to the staphylococcal/streptococcal toxin family. As to quaternary structure, interacts with prothrombin/F2 and coagulation factor X/F12. Interacts with human CXCR4.

The protein localises to the secreted. In terms of biological role, plays a role in the inhibition of host complement activation via the classical pathway by interacting with the Fc region of human IgG and thereby interfering with the IgG/C1q interaction. Also inhibits the penultimate step of plasma clotting by interacting with prothrombin/F2 and coagulation factor X/F12. Does not affect the protease activity of thrombin but interferes with the conversion of prothrombin to thrombin. Interacts with human receptor CXCR4 and specifically inhibits CXCL12-induced calcium mobilization and cell migration. In Staphylococcus aureus (strain NCTC 8325 / PS 47), this protein is Staphylococcal superantigen-like 10.